An 80-amino-acid chain; its full sequence is N-V protease (80 aa).

Belongs to the peptidase S8 family. As to quaternary structure, monomer. As to expression, body cavity.

Its subcellular location is the secreted. Inhibited by the serine protease inhibitors DFP, PMSF and TLCK. Not inhibited by the serine protease inhibitors aprotinin, elastinal, SBTI and benzamidine, the cysteine protease inhibitors iodoacetate and E64, or the metalloprotease inhibitors EDTA and EGTA. In terms of biological role, serine protease. Hydrolyzes the alpha chains of fibrin and fibrinogen completely, has lower activity on the beta and gamma chains of fibrin and fibrinogen. The chain is N-V protease from Alitta virens (Sandworm).